We begin with the raw amino-acid sequence, 262 residues long: Putative glutamine--fructose-6-phosphate aminotransferase [isomerizing] (262 aa).

Catalysis depends on cysteine 2, which acts as the Nucleophile; for GATase activity. The region spanning 2–262 (CGIFGYCNFL…RKSPPFVHNT (261 aa)) is the Glutamine amidotransferase type-2 domain.

It carries out the reaction D-fructose 6-phosphate + L-glutamine = D-glucosamine 6-phosphate + L-glutamate. It participates in nucleotide-sugar biosynthesis; UDP-N-acetyl-alpha-D-glucosamine biosynthesis; alpha-D-glucosamine 6-phosphate from D-fructose 6-phosphate: step 1/1. In terms of biological role, involved in amino sugar synthesis (formation of chitin, supplies the amino sugars of asparagine-linked oligosaccharides of glycoproteins). This is Putative glutamine--fructose-6-phosphate aminotransferase [isomerizing] from Saccharomyces cerevisiae (strain ATCC 204508 / S288c) (Baker's yeast).